A 541-amino-acid chain; its full sequence is T-complex protein 1 subunit epsilon (541 aa).

At A2 the chain carries N-acetylalanine. K20 participates in a covalent cross-link: Glycyl lysine isopeptide (Lys-Gly) (interchain with G-Cter in SUMO2). Residue S26 is modified to Phosphoserine. G53 lines the ADP pocket. G53 is a binding site for ATP. D104 is a Mg(2+) binding site. The ADP site is built by G105, T106, T107, and S175. Positions 106 and 107 each coordinate ATP. Glycyl lysine isopeptide (Lys-Gly) (interchain with G-Cter in SUMO2) cross-links involve residues K210, K214, K265, K275, and K279. Phosphoserine is present on S346. K392 is covalently cross-linked (Glycyl lysine isopeptide (Lys-Gly) (interchain with G-Cter in SUMO2)). Positions 422, 492, 508, and 513 each coordinate ADP. G422 is a binding site for ATP. S539 is modified (phosphoserine).

It belongs to the TCP-1 chaperonin family. As to quaternary structure, component of the chaperonin-containing T-complex (TRiC), a hexadecamer composed of two identical back-to-back stacked rings enclosing a protein folding chamber. Each ring is made up of eight different subunits: TCP1/CCT1, CCT2, CCT3, CCT4, CCT5, CCT6A/CCT6, CCT7, CCT8. Interacts with PACRG. Interacts with DNAAF4. Interacts with DLEC1. Interacts with SPMAP2. Post-translationally, ubiquitinated by the DCX(DCAF12) complex specifically recognizes the diglutamate (Glu-Glu) at the C-terminus, leading to its degradation.

Its subcellular location is the cytoplasm. It localises to the cytoskeleton. The protein resides in the microtubule organizing center. The protein localises to the centrosome. It catalyses the reaction ATP + H2O = ADP + phosphate + H(+). Functionally, component of the chaperonin-containing T-complex (TRiC), a molecular chaperone complex that assists the folding of actin, tubulin and other proteins upon ATP hydrolysis. The TRiC complex mediates the folding of WRAP53/TCAB1, thereby regulating telomere maintenance. As part of the TRiC complex may play a role in the assembly of BBSome, a complex involved in ciliogenesis regulating transports vesicles to the cilia. The sequence is that of T-complex protein 1 subunit epsilon (Cct5) from Rattus norvegicus (Rat).